A 453-amino-acid chain; its full sequence is UDP-glucose 6-dehydrogenase (453 aa).

Residues arginine 2–phenylalanine 19, valine 11, threonine 121, and glutamate 158 each bind NAD(+). Residues glutamate 154–glutamate 158, lysine 210, asparagine 214, phenylalanine 255–glycine 259, and glycine 263 each bind substrate. Cysteine 266 (nucleophile) is an active-site residue. Lysine 269 contributes to the NAD(+) binding site. Lysine 327 is a binding site for substrate. Arginine 334 lines the NAD(+) pocket.

Belongs to the UDP-glucose/GDP-mannose dehydrogenase family.

The catalysed reaction is UDP-alpha-D-glucose + 2 NAD(+) + H2O = UDP-alpha-D-glucuronate + 2 NADH + 3 H(+). It functions in the pathway nucleotide-sugar biosynthesis; UDP-alpha-D-glucuronate biosynthesis; UDP-alpha-D-glucuronate from UDP-alpha-D-glucose: step 1/1. It participates in bacterial outer membrane biogenesis; lipopolysaccharide biosynthesis. The polypeptide is UDP-glucose 6-dehydrogenase (udg) (Pseudomonas aeruginosa (strain ATCC 15692 / DSM 22644 / CIP 104116 / JCM 14847 / LMG 12228 / 1C / PRS 101 / PAO1)).